A 237-amino-acid chain; its full sequence is Periplasmic deoxyribonuclease (237 aa).

A signal peptide spans Met1–Ala27.

The protein belongs to the EndA/NucM nuclease family.

The protein resides in the periplasm. In terms of biological role, endonuclease which is capable of degrading plasmid DNA. This Aeromonas hydrophila protein is Periplasmic deoxyribonuclease (dnsH).